Consider the following 86-residue polypeptide: Small ribosomal subunit protein bS20 (86 aa).

This sequence belongs to the bacterial ribosomal protein bS20 family.

In terms of biological role, binds directly to 16S ribosomal RNA. In Sulfurimonas denitrificans (strain ATCC 33889 / DSM 1251) (Thiomicrospira denitrificans (strain ATCC 33889 / DSM 1251)), this protein is Small ribosomal subunit protein bS20.